We begin with the raw amino-acid sequence, 473 residues long: MTTCSRQFTSSSSMKGSCGIGGGIGGGSSRISSVLAGGSCRAPSTYGGGLSVSSRFSSGGACGLGGGYGGGFSSSSSFGSGFGGGYGGGLGAGFGGGLGAGFGGGFAGGDGLLVGSEKVTMQNLNDRLASYLDKVRALEEANADLEVKIRDWYQRQRPSEIKDYSPYFKTIEDLRNKIIAATIENAQPILQIDNARLAADDFRTKYEHELALRQTVEADVNGLRRVLDELTLARTDLEMQIEGLKEELAYLRKNHEEEMLALRGQTGGDVNVEMDAAPGVDLSRILNEMRDQYEQMAEKNRRDAETWFLSKTEELNKEVASNSELVQSSRSEVTELRRVLQGLEIELQSQLSMKASLENSLEETKGRYCMQLSQIQGLIGSVEEQLAQLRCEMEQQSQEYQILLDVKTRLEQEIATYRRLLEGEDAHLSSQQASGQSYSSREVFTSSSSSSSRQTRPILKEQSSSSFSQGQSS.

The interval 1–116 (MTTCSRQFTS…AGGDGLLVGS (116 aa)) is head. Residues 117 to 152 (EKVTMQNLNDRLASYLDKVRALEEANADLEVKIRDW) are coil 1A. One can recognise an IF rod domain in the interval 117–428 (EKVTMQNLND…RLLEGEDAHL (312 aa)). Residues 153-170 (YQRQRPSEIKDYSPYFKT) form a linker 1 region. The tract at residues 171–262 (IEDLRNKIIA…KNHEEEMLAL (92 aa)) is coil 1B. Positions 263–285 (RGQTGGDVNVEMDAAPGVDLSRI) are linker 12. The segment at 286–424 (LNEMRDQYEQ…ATYRRLLEGE (139 aa)) is coil 2. Positions 425–473 (DAHLSSQQASGQSYSSREVFTSSSSSSSRQTRPILKEQSSSSFSQGQSS) are tail. The segment at 428–473 (LSSQQASGQSYSSREVFTSSSSSSSRQTRPILKEQSSSSFSQGQSS) is disordered. 2 stretches are compositionally biased toward low complexity: residues 429-452 (SSQQASGQSYSSREVFTSSSSSSS) and 462-473 (QSSSSFSQGQSS).

The protein belongs to the intermediate filament family. Heterodimer of a type I and a type II keratin. KRT16 associates with KRT6 isomers (KRT6A or KRT6B). Interacts with TCHP. Interacts with TRADD. In terms of tissue distribution, expressed in the corneal epithelium (at protein level).

Epidermis-specific type I keratin that plays a key role in skin. Acts as a regulator of innate immunity in response to skin barrier breach: required for some inflammatory checkpoint for the skin barrier maintenance. This chain is Keratin, type I cytoskeletal 16 (KRT16), found in Homo sapiens (Human).